The chain runs to 265 residues: NADH dehydrogenase [ubiquinone] iron-sulfur protein 3, mitochondrial (265 aa).

The transit peptide at 1–33 (MAALIRNLGARAAVAALSAKHVVPAAGSTALRM) directs the protein to the mitochondrion.

This sequence belongs to the complex I 30 kDa subunit family. Part of the mitochondrial membrane respiratory chain NADH dehydrogenase (Complex I). Interacts with sicily; interaction is stronger with unprocessed sicily protein.

Its subcellular location is the mitochondrion. The enzyme catalyses a ubiquinone + NADH + 5 H(+)(in) = a ubiquinol + NAD(+) + 4 H(+)(out). Functionally, core subunit of the mitochondrial membrane respiratory chain NADH dehydrogenase (Complex I) that is believed to belong to the minimal assembly required for catalysis. Complex I functions in the transfer of electrons from NADH to the respiratory chain. The immediate electron acceptor for the enzyme is believed to be ubiquinone. This is NADH dehydrogenase [ubiquinone] iron-sulfur protein 3, mitochondrial from Drosophila melanogaster (Fruit fly).